We begin with the raw amino-acid sequence, 160 residues long: Cytochrome b6-f complex subunit 4 (160 aa).

A run of 3 helical transmembrane segments spans residues Leu36–Val56, Leu95–Glu115, and Thr131–Ile151.

This sequence belongs to the cytochrome b family. PetD subfamily. In terms of assembly, the 4 large subunits of the cytochrome b6-f complex are cytochrome b6, subunit IV (17 kDa polypeptide, petD), cytochrome f and the Rieske protein, while the 4 small subunits are petG, petL, petM and petN. The complex functions as a dimer.

It localises to the plastid. It is found in the chloroplast thylakoid membrane. In terms of biological role, component of the cytochrome b6-f complex, which mediates electron transfer between photosystem II (PSII) and photosystem I (PSI), cyclic electron flow around PSI, and state transitions. The sequence is that of Cytochrome b6-f complex subunit 4 from Pisum sativum (Garden pea).